Reading from the N-terminus, the 277-residue chain is Thiazole synthase (277 aa).

K119 acts as the Schiff-base intermediate with DXP in catalysis. 1-deoxy-D-xylulose 5-phosphate-binding positions include G180, 206–207 (AG), and 228–229 (NT).

It belongs to the ThiG family. Homotetramer. Forms heterodimers with either ThiH or ThiS.

The protein resides in the plastid. Its subcellular location is the chloroplast. The enzyme catalyses [ThiS sulfur-carrier protein]-C-terminal-Gly-aminoethanethioate + 2-iminoacetate + 1-deoxy-D-xylulose 5-phosphate = [ThiS sulfur-carrier protein]-C-terminal Gly-Gly + 2-[(2R,5Z)-2-carboxy-4-methylthiazol-5(2H)-ylidene]ethyl phosphate + 2 H2O + H(+). Its pathway is cofactor biosynthesis; thiamine diphosphate biosynthesis. Catalyzes the rearrangement of 1-deoxy-D-xylulose 5-phosphate (DXP) to produce the thiazole phosphate moiety of thiamine. Sulfur is provided by the thiocarboxylate moiety of the carrier protein ThiS. In vitro, sulfur can be provided by H(2)S. This chain is Thiazole synthase, found in Pyropia yezoensis (Susabi-nori).